A 40-amino-acid polypeptide reads, in one-letter code: Photosystem II reaction center protein J (40 aa).

Residues 10–30 (LWIIGTVTGILVIGLIGIFFF) traverse the membrane as a helical segment.

The protein belongs to the PsbJ family. PSII is composed of 1 copy each of membrane proteins PsbA, PsbB, PsbC, PsbD, PsbE, PsbF, PsbH, PsbI, PsbJ, PsbK, PsbL, PsbM, PsbT, PsbX, PsbY, PsbZ, Psb30/Ycf12, at least 3 peripheral proteins of the oxygen-evolving complex and a large number of cofactors. It forms dimeric complexes.

Its subcellular location is the plastid membrane. In terms of biological role, one of the components of the core complex of photosystem II (PSII). PSII is a light-driven water:plastoquinone oxidoreductase that uses light energy to abstract electrons from H(2)O, generating O(2) and a proton gradient subsequently used for ATP formation. It consists of a core antenna complex that captures photons, and an electron transfer chain that converts photonic excitation into a charge separation. The chain is Photosystem II reaction center protein J from Cuscuta exaltata (Tall dodder).